An 88-amino-acid chain; its full sequence is DNA-directed RNA polymerase subunit omega (88 aa).

It belongs to the RNA polymerase subunit omega family. In terms of assembly, the RNAP catalytic core consists of 2 alpha, 1 beta, 1 beta' and 1 omega subunit. When a sigma factor is associated with the core the holoenzyme is formed, which can initiate transcription.

The enzyme catalyses RNA(n) + a ribonucleoside 5'-triphosphate = RNA(n+1) + diphosphate. Promotes RNA polymerase assembly. Latches the N- and C-terminal regions of the beta' subunit thereby facilitating its interaction with the beta and alpha subunits. The chain is DNA-directed RNA polymerase subunit omega from Thermobifida fusca (strain YX).